Reading from the N-terminus, the 417-residue chain is Brevican core protein (417 aa).

Positions 1–22 (MAPLFLPLLIALALAPGPTASA) are cleaved as a signal peptide. An Ig-like V-type domain is found at 23–155 (DVLEGDSSED…SSDAVEVKVK (133 aa)). 3 disulfides stabilise this stretch: Cys-57–Cys-137, Cys-179–Cys-250, and Cys-203–Cys-224. A glycan (N-linked (GlcNAc...) asparagine) is linked at Asn-130. Link domains are found at residues 157 to 252 (VVFL…YCYA) and 257 to 354 (GELF…YCFR). N-linked (GlcNAc...) asparagine glycosylation is present at Asn-267. 2 disulfides stabilise this stretch: Cys-277-Cys-352 and Cys-301-Cys-322. N-linked (GlcNAc...) asparagine glycosylation is present at Asn-337.

This sequence belongs to the aggrecan/versican proteoglycan family. As to expression, central nervous system.

It localises to the secreted. The protein localises to the extracellular space. The protein resides in the extracellular matrix. In terms of biological role, may play a role in the terminally differentiating and the adult nervous system during postnatal development. Could stabilize interactions between hyaluronan (HA) and brain proteoglycans. This is Brevican core protein (BCAN) from Felis catus (Cat).